A 105-amino-acid chain; its full sequence is Large ribosomal subunit protein uL24 (105 aa).

The segment at 1 to 25 (MHIKKGDNVKVIAGKDKGKEGKVVS) is disordered.

It belongs to the universal ribosomal protein uL24 family. In terms of assembly, part of the 50S ribosomal subunit.

In terms of biological role, one of two assembly initiator proteins, it binds directly to the 5'-end of the 23S rRNA, where it nucleates assembly of the 50S subunit. Its function is as follows. One of the proteins that surrounds the polypeptide exit tunnel on the outside of the subunit. The polypeptide is Large ribosomal subunit protein uL24 (Staphylococcus saprophyticus subsp. saprophyticus (strain ATCC 15305 / DSM 20229 / NCIMB 8711 / NCTC 7292 / S-41)).